Here is a 35-residue protein sequence, read N- to C-terminus: MTLAGYRVDSCNGCGKAYLVGESHDRKKCAECASK.

In Bacillus phage SP01 (Bacteriophage SP01), this protein is Putative gene 58 protein (58).